Consider the following 293-residue polypeptide: 3-methyl-2-oxobutanoate hydroxymethyltransferase (293 aa).

A disordered region spans residues 1-29 (MTAAHDRSENQPGRPGGETTAPYGSAPRR). 2 residues coordinate Mg(2+): Asp73 and Asp112. 3-methyl-2-oxobutanoate is bound by residues 73-74 (DS), Asp112, and Lys142. Glu144 provides a ligand contact to Mg(2+). Glu210 functions as the Proton acceptor in the catalytic mechanism.

This sequence belongs to the PanB family. As to quaternary structure, homodecamer; pentamer of dimers. The cofactor is Mg(2+).

It localises to the cytoplasm. It carries out the reaction 3-methyl-2-oxobutanoate + (6R)-5,10-methylene-5,6,7,8-tetrahydrofolate + H2O = 2-dehydropantoate + (6S)-5,6,7,8-tetrahydrofolate. Its pathway is cofactor biosynthesis; (R)-pantothenate biosynthesis; (R)-pantoate from 3-methyl-2-oxobutanoate: step 1/2. In terms of biological role, catalyzes the reversible reaction in which hydroxymethyl group from 5,10-methylenetetrahydrofolate is transferred onto alpha-ketoisovalerate to form ketopantoate. In Saccharopolyspora erythraea (strain ATCC 11635 / DSM 40517 / JCM 4748 / NBRC 13426 / NCIMB 8594 / NRRL 2338), this protein is 3-methyl-2-oxobutanoate hydroxymethyltransferase.